Here is a 184-residue protein sequence, read N- to C-terminus: ATP synthase subunit b, chloroplastic (184 aa).

A helical membrane pass occupies residues 29 to 49 (INIINLGIVIGLLVYLGEGVL).

Belongs to the ATPase B chain family. In terms of assembly, F-type ATPases have 2 components, F(1) - the catalytic core - and F(0) - the membrane proton channel. F(1) has five subunits: alpha(3), beta(3), gamma(1), delta(1), epsilon(1). F(0) has four main subunits: a(1), b(1), b'(1) and c(10-14). The alpha and beta chains form an alternating ring which encloses part of the gamma chain. F(1) is attached to F(0) by a central stalk formed by the gamma and epsilon chains, while a peripheral stalk is formed by the delta, b and b' chains.

The protein resides in the plastid. Its subcellular location is the chloroplast thylakoid membrane. Its function is as follows. F(1)F(0) ATP synthase produces ATP from ADP in the presence of a proton or sodium gradient. F-type ATPases consist of two structural domains, F(1) containing the extramembraneous catalytic core and F(0) containing the membrane proton channel, linked together by a central stalk and a peripheral stalk. During catalysis, ATP synthesis in the catalytic domain of F(1) is coupled via a rotary mechanism of the central stalk subunits to proton translocation. Functionally, component of the F(0) channel, it forms part of the peripheral stalk, linking F(1) to F(0). This is ATP synthase subunit b, chloroplastic from Psilotum nudum (Whisk fern).